Here is a 98-residue protein sequence, read N- to C-terminus: NADH-ubiquinone oxidoreductase chain 4L (98 aa).

3 consecutive transmembrane segments (helical) span residues 1–21 (MSLV…GLLM), 29–49 (SLLC…LTIL), and 59–79 (MPII…SLLV).

This sequence belongs to the complex I subunit 4L family. As to quaternary structure, core subunit of respiratory chain NADH dehydrogenase (Complex I) which is composed of 45 different subunits.

It localises to the mitochondrion inner membrane. It catalyses the reaction a ubiquinone + NADH + 5 H(+)(in) = a ubiquinol + NAD(+) + 4 H(+)(out). Functionally, core subunit of the mitochondrial membrane respiratory chain NADH dehydrogenase (Complex I) which catalyzes electron transfer from NADH through the respiratory chain, using ubiquinone as an electron acceptor. Part of the enzyme membrane arm which is embedded in the lipid bilayer and involved in proton translocation. The polypeptide is NADH-ubiquinone oxidoreductase chain 4L (MT-ND4L) (Cervus elaphus (Red deer)).